A 558-amino-acid chain; its full sequence is Atlastin-1 (558 aa).

The segment at 1-27 (MAKNRRDRNSWGGFSEKTYEWSSEEEE) is disordered. An N-terminal hypervariable region (HVR) region spans residues 1–34 (MAKNRRDRNSWGGFSEKTYEWSSEEEEPVKKAGP). Residues 1-449 (MAKNRRDRNS…NIFHAARTPA (449 aa)) lie on the Cytoplasmic side of the membrane. 3 positions are modified to phosphoserine: Ser10, Ser22, and Ser23. The GB1/RHD3-type G domain maps to 64–309 (DKEVVAVSVA…LIPWLLSPES (246 aa)). GDP is bound by residues Arg77, Lys78, Gly79, Lys80, Ser81, Phe82, Gln148, Arg217, Asp218, Val276, and Asn279. Positions 77, 78, 79, 80, 81, and 82 each coordinate GTP. Ser81 is a binding site for Mg(2+). GTP-binding residues include Arg217, Asp218, and Val276. A 3HB (three-helix bundle) domain region spans residues 347–438 (MLQATAEANN…YIQYIKHNDS (92 aa)). Lys395 bears the N6-acetyllysine mark. The stretch at 412-439 (EFSRRYLQQLESEIDELYIQYIKHNDSK) forms a coiled coil. The linker stretch occupies residues 439-447 (KNIFHAART). Residues 450 to 470 (TLFVVIFITYVIAGVTGFIGL) form a helical membrane-spanning segment. Position 471 (Asp471) is a topological domain, lumenal. The helical transmembrane segment at 472–492 (IIASLCNMIMGLTLITLCTWA) threads the bilayer. Topologically, residues 493 to 558 (YIRYSGEYRE…STEQSEKKKM (66 aa)) are cytoplasmic. The tract at residues 521-558 (NEALYKLYSAAATHRHLYHQAFPTPKSESTEQSEKKKM) is autoinhibitory domain.

Belongs to the TRAFAC class dynamin-like GTPase superfamily. GB1/RHD3 GTPase family. GB1 subfamily. As to quaternary structure, monomeric and homodimeric. The homodimer, transiently formed by two molecules on opposing membranes, is the active form mediating ER membrane fusion. Interacts with REEP1, REEP5, RTN3 and RTN4 (via the transmembrane region); these proteins are involved in endoplasmic reticulum tubular network organization. Interacts with ZFYVE27; both proteins are involved in endoplasmic reticulum tubular network organization. Interacts with ARL6IP1; both proteins are involved in endoplasmic reticulum tubular network organization. Interacts with SPAST; the interaction is direct, could recruit SPAST to Golgi membranes. Interacts (via N-terminal region) with MAP4K4 (via CNH regulatory domain). May interact with TMED2. Interacts with CPT1C. Phosphorylated. Phosphorylation, by different kinases, of the N-terminal hypervariable region (HVR) regulates the ATL1-mediated membrane tethering step.

The protein resides in the endoplasmic reticulum membrane. It localises to the golgi apparatus membrane. It is found in the cell projection. The protein localises to the axon. It carries out the reaction GTP + H2O = GDP + phosphate + H(+). Functionally, atlastin-1 (ATL1) is a membrane-anchored GTPase that mediates the GTP-dependent fusion of endoplasmic reticulum (ER) membranes, maintaining the continuous ER network. It facilitates the formation of three-way junctions where ER tubules intersect. Two atlastin-1 on neighboring ER tubules bind GTP and form loose homodimers through the GB1/RHD3-type G domains and 3HB regions. Upon GTP hydrolysis, the 3HB regions tighten, pulling the membranes together to drive their fusion. After fusion, the homodimer disassembles upon release of inorganic phosphate (Pi). Subsequently, GDP dissociates, resetting the monomers to a conformation ready for a new fusion cycle. May also regulate more or less directly Golgi biogenesis. Indirectly regulates axonal development. The protein is Atlastin-1 of Macaca fascicularis (Crab-eating macaque).